The sequence spans 382 residues: Farnesyl diphosphate synthase (382 aa).

K81, R84, and Q120 together coordinate isopentenyl diphosphate. The Mg(2+) site is built by D127 and D131. R136 is a dimethylallyl diphosphate binding site. Residue R137 coordinates isopentenyl diphosphate. Positions 230, 231, 270, 287, and 296 each coordinate dimethylallyl diphosphate.

The protein belongs to the FPP/GGPP synthase family. The cofactor is Mg(2+).

It localises to the cytoplasm. The catalysed reaction is isopentenyl diphosphate + dimethylallyl diphosphate = (2E)-geranyl diphosphate + diphosphate. It catalyses the reaction isopentenyl diphosphate + (2E)-geranyl diphosphate = (2E,6E)-farnesyl diphosphate + diphosphate. It participates in isoprenoid biosynthesis; farnesyl diphosphate biosynthesis; farnesyl diphosphate from geranyl diphosphate and isopentenyl diphosphate: step 1/1. Its pathway is isoprenoid biosynthesis; geranyl diphosphate biosynthesis; geranyl diphosphate from dimethylallyl diphosphate and isopentenyl diphosphate: step 1/1. With respect to regulation, inhibited by aminobisphosphonate drugs (aBP), such as risedronate and alendronate. In terms of biological role, key enzyme in isoprenoid biosynthesis which catalyzes the formation of farnesyl diphosphate (FPP), a sterol precursor. Involved in the inhibition of cell growth. The polypeptide is Farnesyl diphosphate synthase (fps) (Dictyostelium discoideum (Social amoeba)).